The sequence spans 498 residues: Lysine--tRNA ligase (498 aa).

Positions 408 and 415 each coordinate Mg(2+).

The protein belongs to the class-II aminoacyl-tRNA synthetase family. In terms of assembly, homodimer. Mg(2+) is required as a cofactor.

It localises to the cytoplasm. It carries out the reaction tRNA(Lys) + L-lysine + ATP = L-lysyl-tRNA(Lys) + AMP + diphosphate. This chain is Lysine--tRNA ligase, found in Listeria welshimeri serovar 6b (strain ATCC 35897 / DSM 20650 / CCUG 15529 / CIP 8149 / NCTC 11857 / SLCC 5334 / V8).